A 157-amino-acid chain; its full sequence is Protein Smg (157 aa).

This sequence belongs to the Smg family.

In Pectobacterium atrosepticum (strain SCRI 1043 / ATCC BAA-672) (Erwinia carotovora subsp. atroseptica), this protein is Protein Smg.